A 522-amino-acid chain; its full sequence is MSEIWEDAIKSNAWPFVEAKKILDSLNGQIPEKGYVLFETGYGPSGLPHIGTFGENARMVMVQKAFEQLSDIPTKLICFSDDMDGLRTVPSNIPNPEMVAQYMDMPLTSIPDTFGECESYGHYMNAKLRSFLDKFGFEYAFYSSTNCYKAGMFDEMLIMVLEKYDEIMELMLPTFREERKATYSPFMPICPKTGKVLQVPIEKWDAKAGTVTYKDKAGNYIEVPVTGGHCKLQWKPDFGMRWAALKVDYEMYGKDHLANARLYSEICRILGGKPPVQLCYELFLDENGEKISKSKGNSISIDDWLKYAPVESMALFMYQNPTRAKRLFFDVIPKNVDEYITFNQKYHLEEDRAKRFANPVYHIHHGNVPKIETFGITYSLLLNLTSVCNPSDKSVLWGFISKYEPNATPNTNPYLDHLAEFAIRYYNDFIKAHKSYLSPSEKHKVILQDILDMLSDIADQTEAEAIQKAIYDIGMKAGYENLRDYFKDLYQILLGQNEGPRLGTFIKLYGVQEMKKLVEGQL.

Positions 44–52 match the 'HIGH' region motif; the sequence is PSGLPHIGT. Residues 290-294 carry the 'KMSKS' region motif; the sequence is KISKS. Residue Lys293 coordinates ATP.

This sequence belongs to the class-I aminoacyl-tRNA synthetase family.

The protein localises to the cytoplasm. The catalysed reaction is tRNA(Lys) + L-lysine + ATP = L-lysyl-tRNA(Lys) + AMP + diphosphate. This is Lysine--tRNA ligase from Rickettsia peacockii (strain Rustic).